We begin with the raw amino-acid sequence, 514 residues long: Embryonic protein UVS.2 (514 aa).

Positions 1-19 are cleaved as a signal peptide; that stretch reads MDVKISAILLACIIQYAVS. In terms of domain architecture, Peptidase M12A spans 90–286; it reads SAINDARFLW…SKINKLYECN (197 aa). N-linked (GlcNAc...) asparagine glycosylation is present at Asn112. Cystine bridges form between Cys137–Cys285, Cys158–Cys178, Cys288–Cys314, Cys340–Cys363, Cys402–Cys428, and Cys455–Cys475. His186 lines the Zn(2+) pocket. Glu187 is an active-site residue. Zn(2+) contacts are provided by His190 and His196. N-linked (GlcNAc...) asparagine glycosylation is present at Asn199. CUB domains follow at residues 288-400 and 402-513; these read CSNL…YGSI and CGGA…YTFV. N-linked (GlcNAc...) asparagine glycans are attached at residues Asn421, Asn427, and Asn464.

Requires Zn(2+) as cofactor.

The sequence is that of Embryonic protein UVS.2 from Xenopus laevis (African clawed frog).